We begin with the raw amino-acid sequence, 305 residues long: Oxygen-dependent coproporphyrinogen-III oxidase (305 aa).

Residue Ser92 coordinates substrate. A divalent metal cation is bound by residues His96 and His106. His106 acts as the Proton donor in catalysis. Substrate is bound at residue 108 to 110 (NVR). Positions 145 and 175 each coordinate a divalent metal cation. An important for dimerization region spans residues 239–274 (YVEFNLLFDRGTLFGLQSGGRAESILISLPPLVRWE). 257 to 259 (GGR) is a binding site for substrate.

This sequence belongs to the aerobic coproporphyrinogen-III oxidase family. In terms of assembly, homodimer. The cofactor is a divalent metal cation.

The protein resides in the cytoplasm. It carries out the reaction coproporphyrinogen III + O2 + 2 H(+) = protoporphyrinogen IX + 2 CO2 + 2 H2O. It participates in porphyrin-containing compound metabolism; protoporphyrin-IX biosynthesis; protoporphyrinogen-IX from coproporphyrinogen-III (O2 route): step 1/1. Its function is as follows. Involved in the heme biosynthesis. Catalyzes the aerobic oxidative decarboxylation of propionate groups of rings A and B of coproporphyrinogen-III to yield the vinyl groups in protoporphyrinogen-IX. The protein is Oxygen-dependent coproporphyrinogen-III oxidase of Xylella fastidiosa (strain Temecula1 / ATCC 700964).